The primary structure comprises 431 residues: Enolase (431 aa).

Gln167 is a binding site for (2R)-2-phosphoglycerate. Catalysis depends on Glu209, which acts as the Proton donor. The Mg(2+) site is built by Asp246, Glu290, and Asp317. Positions 342, 371, 372, and 393 each coordinate (2R)-2-phosphoglycerate. The Proton acceptor role is filled by Lys342.

The protein belongs to the enolase family. In terms of assembly, component of the RNA degradosome, a multiprotein complex involved in RNA processing and mRNA degradation. It depends on Mg(2+) as a cofactor.

The protein localises to the cytoplasm. The protein resides in the secreted. It is found in the cell surface. It carries out the reaction (2R)-2-phosphoglycerate = phosphoenolpyruvate + H2O. It participates in carbohydrate degradation; glycolysis; pyruvate from D-glyceraldehyde 3-phosphate: step 4/5. Catalyzes the reversible conversion of 2-phosphoglycerate (2-PG) into phosphoenolpyruvate (PEP). It is essential for the degradation of carbohydrates via glycolysis. This chain is Enolase, found in Erwinia tasmaniensis (strain DSM 17950 / CFBP 7177 / CIP 109463 / NCPPB 4357 / Et1/99).